The primary structure comprises 276 residues: MKIEKAKQLTARKFKRMSGVSRQTFNYMVDVVKADEKKKKKPGRRPKLIIEDQVLMVIQYWREYRTYYHIGLDWGLSESAVCRTVYKIENILISSRKFSLPGKKELLKMPSQENLVVMDVTESPIERPKKSQKKFFSGKAGEHTLKTQLVIHQKTSQIICLGHGKGRIHDFRLFKTSGVKFSELLKVIADKGYQGITKIHKLSETPIKKPKGKKLAKEQKEYNRELNRLRIVVEHVNRRLKIFNILSNQYRNRHRRFGLRSNLIAGIYNYELALKA.

Residues 118 to 256 (MDVTESPIER…SNQYRNRHRR (139 aa)) form the DDE Tnp4 domain. 4 residues coordinate a divalent metal cation: D119, D170, D190, and E234.

The protein belongs to the transposase 11 family. It depends on a divalent metal cation as a cofactor.

Involved in the transposition of the insertion sequence. The protein is Probable transposase for insertion sequence element IS702 of Microchaete diplosiphon (Fremyella diplosiphon).